A 223-amino-acid chain; its full sequence is 7-cyano-7-deazaguanine synthase (223 aa).

15 to 25 (FSGGQDSTTCL) serves as a coordination point for ATP. Positions 191, 200, 203, and 206 each coordinate Zn(2+).

Belongs to the QueC family. Homodimer. The cofactor is Zn(2+).

It carries out the reaction 7-carboxy-7-deazaguanine + NH4(+) + ATP = 7-cyano-7-deazaguanine + ADP + phosphate + H2O + H(+). It participates in purine metabolism; 7-cyano-7-deazaguanine biosynthesis. In terms of biological role, catalyzes the ATP-dependent conversion of 7-carboxy-7-deazaguanine (CDG) to 7-cyano-7-deazaguanine (preQ(0)). This chain is 7-cyano-7-deazaguanine synthase, found in Staphylococcus haemolyticus (strain JCSC1435).